Consider the following 250-residue polypeptide: MSGHSKWATIKRKKAATDQKRGNLFTKLVKEITIAAKMGGADPGGNPRLRLAIDTARSNSMPMENILRAVKKGTGELEGVTYDEITYEGYGPAGIALIIETATDNRNRTVADIRHIMSRNNGSLGESGSVSWMFHRKGSLDVSKSAVSEDMLLEILLDAGLEDLESDDAIYYTVITDLKDLETVKKALDAAAIPFENARIDMIPENYIELEAEDASKVIRIIDALENNDDVQAVYSNMEISEKAMNSLNE.

The protein belongs to the TACO1 family.

It is found in the cytoplasm. In Chlorobium phaeobacteroides (strain DSM 266 / SMG 266 / 2430), this protein is Probable transcriptional regulatory protein Cpha266_0538.